The sequence spans 281 residues: Putative phosphatase/phosphodiesterase MG246 (281 aa).

Aspartate 11, glutamate 42, asparagine 43, and asparagine 70 together coordinate Fe cation. Histidine 71 acts as the Proton donor in catalysis. Positions 157, 182, and 184 each coordinate Fe cation.

It belongs to the YmdB-like family. The cofactor is Fe(3+).

This chain is Putative phosphatase/phosphodiesterase MG246, found in Mycoplasma genitalium (strain ATCC 33530 / DSM 19775 / NCTC 10195 / G37) (Mycoplasmoides genitalium).